The primary structure comprises 583 residues: Lamin-B3 (583 aa).

Positions 1-30 (MATSTPSRAREHASAAQSPGSPTRISRMQE) are disordered. A head region spans residues 2–32 (ATSTPSRAREHASAAQSPGSPTRISRMQEKE). A compositionally biased stretch (polar residues) spans 15–26 (AAQSPGSPTRIS). At S21 the chain carries Phosphoserine. Positions 30-386 (EKEDLRHLND…KMLEGEEQRL (357 aa)) constitute an IF rod domain. Residues 33 to 67 (DLRHLNDRLAAYIERVRSLEADKSLLKIQLEEREE) form a coil 1A region. The interval 68–79 (VSSREVTNLRQL) is linker 1. The tract at residues 80 to 215 (YETELADARK…QKNIHTQEVK (136 aa)) is coil 1B. A linker 2 region spans residues 216 to 242 (EIKKRHDTRIVEIDSGRRVEFESKLAE). The segment at 243–384 (ALQELRRDHE…YRKMLEGEEQ (142 aa)) is coil 2. Residues 383–431 (EQRLKLSPSPSQRSTVSRASTSQTSRLLRGKKRKLDETGRSVTKRSYKV) are disordered. Residues 385–580 (RLKLSPSPSQ…QSHQSVDPSC (196 aa)) form a tail region. Over residues 390-408 (PSPSQRSTVSRASTSQTSR) the composition is skewed to polar residues. S391 carries the post-translational modification Phosphoserine. Residues 429–546 (YKVVQQASST…EECAERTLYR (118 aa)) form the LTD domain. A Cysteine methyl ester modification is found at C580. C580 carries the S-farnesyl cysteine lipid modification. Positions 581-583 (SIM) are cleaved as a propeptide — removed in mature form.

It belongs to the intermediate filament family. Post-translationally, phosphorylation plays a key role in lamin organization, subcellular localization and nuclear envelope disintegration. Phosphorylation by CDK1 at Ser-21 at the onset of mitosis drives lamin disassembly and nuclear envelope breakdown.

It is found in the nucleus lamina. The protein resides in the nucleus envelope. The protein localises to the nucleus. Its subcellular location is the nucleoplasm. It localises to the nucleus matrix. Functionally, lamins are intermediate filament proteins that assemble into a filamentous meshwork, and which constitute the major components of the nuclear lamina, a fibrous layer on the nucleoplasmic side of the inner nuclear membrane. Lamins provide a framework for the nuclear envelope, bridging the nuclear envelope and chromatin, thereby playing an important role in nuclear assembly, chromatin organization, nuclear membrane and telomere dynamics. The structural integrity of the lamina is strictly controlled by the cell cycle, as seen by the disintegration and formation of the nuclear envelope in prophase and telophase, respectively. The sequence is that of Lamin-B3 (lmnb3.L) from Xenopus laevis (African clawed frog).